A 207-amino-acid chain; its full sequence is MPKVALLKQDGSNVGDIELNDSVFGIEPNTHVLHEAVVMQRASLRQGTHAVKNRSEVRGGGRKPWRQKGTGRARQGSTRSPQWVGGGTVFGPTPRSYSYKLPKKVRRLALRSALSSKVNEESLLVLENISIDAPKTKEIVNILKGLQVDAKALIVLSEKDETVIRSANNLQNVTVLTVEELNILDLLMHDKLIITKDAAEKAGEVLA.

The segment at 45–80 (RQGTHAVKNRSEVRGGGRKPWRQKGTGRARQGSTRS) is disordered. Basic residues predominate over residues 60 to 71 (GGRKPWRQKGTG).

It belongs to the universal ribosomal protein uL4 family. Part of the 50S ribosomal subunit.

One of the primary rRNA binding proteins, this protein initially binds near the 5'-end of the 23S rRNA. It is important during the early stages of 50S assembly. It makes multiple contacts with different domains of the 23S rRNA in the assembled 50S subunit and ribosome. Functionally, forms part of the polypeptide exit tunnel. The chain is Large ribosomal subunit protein uL4 from Oceanobacillus iheyensis (strain DSM 14371 / CIP 107618 / JCM 11309 / KCTC 3954 / HTE831).